A 295-amino-acid chain; its full sequence is Bifunctional protein FolD (295 aa).

Residues 166–168, S191, and I232 contribute to the NADP(+) site; that span reads GRS.

This sequence belongs to the tetrahydrofolate dehydrogenase/cyclohydrolase family. In terms of assembly, homodimer.

It catalyses the reaction (6R)-5,10-methylene-5,6,7,8-tetrahydrofolate + NADP(+) = (6R)-5,10-methenyltetrahydrofolate + NADPH. It carries out the reaction (6R)-5,10-methenyltetrahydrofolate + H2O = (6R)-10-formyltetrahydrofolate + H(+). It functions in the pathway one-carbon metabolism; tetrahydrofolate interconversion. In terms of biological role, catalyzes the oxidation of 5,10-methylenetetrahydrofolate to 5,10-methenyltetrahydrofolate and then the hydrolysis of 5,10-methenyltetrahydrofolate to 10-formyltetrahydrofolate. In Rhodopseudomonas palustris (strain BisB5), this protein is Bifunctional protein FolD.